We begin with the raw amino-acid sequence, 124 residues long: Vitelline membrane protein Vm32E (124 aa).

The first 19 residues, 1–19 (MKTVAFLAVVVLFAAFACA), serve as a signal peptide directing secretion. The 40-residue stretch at 42–81 (SVPAPPCPKNYLFSCQPNLVPAPCAQQAAPAAYGSAGAYT) folds into the VM domain.

The protein belongs to the vitelline membrane family.

The protein localises to the secreted. Its function is as follows. Major early eggshell protein. This is Vitelline membrane protein Vm32E from Drosophila pseudoobscura pseudoobscura (Fruit fly).